A 418-amino-acid chain; its full sequence is MHKKKYTFSMWMKYLEKFDKKDRKNLFELKLIAKKLGLLNLKSFFFTVGGTNGKGTTCAMLEKLLLDSGYQVGLYTSPHLINYSERIKVNGLYLSEKDHIFSFLIIDAEKGNVSLTYFEFITLSALFLFSQYSLDIIILEVGLGGRLDATNIIDSDLSVITNIGIDHTSCLGTDRISIGREKSGIFRKGKIAVIGEKNIPISVDEIAKEKKTILKKIDVDWFWTRTKIDSWNFIHSNIELYNLPVSRIPLSNTAIALASLFYSGLEVNLKKLKSSISKVQLSGRFQTVFNSPRIILDVAHNVHAALYLSEKIDEIDTEGQIYAVFGILKDKDVAGVVQVLQKKINYWYVVNLKTNRSASINYLKKKLSLNNALFFNNINESWQAIKKVITKKDIILVFGSFFTVSEFMSIKDRRLTLY.

53-56 (GKGT) provides a ligand contact to ATP. Residue serine 77 coordinates Mg(2+). 116 to 119 (TYFE) is a binding site for 7,8-dihydropteroate. Glutamate 140 serves as a coordination point for Mg(2+). 147–149 (LDA) lines the 7,8-dihydropteroate pocket. Histidine 167 contributes to the Mg(2+) binding site. ATP-binding residues include asparagine 252, arginine 284, and aspartate 297.

The protein belongs to the folylpolyglutamate synthase family. As to quaternary structure, monomer. Mg(2+) serves as cofactor.

It carries out the reaction 7,8-dihydropteroate + L-glutamate + ATP = 7,8-dihydrofolate + ADP + phosphate + H(+). It catalyses the reaction (6S)-5,6,7,8-tetrahydrofolyl-(gamma-L-Glu)(n) + L-glutamate + ATP = (6S)-5,6,7,8-tetrahydrofolyl-(gamma-L-Glu)(n+1) + ADP + phosphate + H(+). The enzyme catalyses 10-formyltetrahydrofolyl-(gamma-L-Glu)(n) + L-glutamate + ATP = 10-formyltetrahydrofolyl-(gamma-L-Glu)(n+1) + ADP + phosphate + H(+). The catalysed reaction is (6R)-5,10-methylenetetrahydrofolyl-(gamma-L-Glu)(n) + L-glutamate + ATP = (6R)-5,10-methylenetetrahydrofolyl-(gamma-L-Glu)(n+1) + ADP + phosphate + H(+). The protein operates within cofactor biosynthesis; tetrahydrofolate biosynthesis; 7,8-dihydrofolate from 2-amino-4-hydroxy-6-hydroxymethyl-7,8-dihydropteridine diphosphate and 4-aminobenzoate: step 2/2. It functions in the pathway cofactor biosynthesis; tetrahydrofolylpolyglutamate biosynthesis. In terms of biological role, functions in two distinct reactions of the de novo folate biosynthetic pathway. Catalyzes the addition of a glutamate residue to dihydropteroate (7,8-dihydropteroate or H2Pte) to form dihydrofolate (7,8-dihydrofolate monoglutamate or H2Pte-Glu). Also catalyzes successive additions of L-glutamate to tetrahydrofolate or 10-formyltetrahydrofolate or 5,10-methylenetetrahydrofolate, leading to folylpolyglutamate derivatives. This chain is Dihydrofolate synthase/folylpolyglutamate synthase (folC), found in Buchnera aphidicola subsp. Schizaphis graminum (strain Sg).